Consider the following 822-residue polypeptide: Phenylalanine--tRNA ligase beta subunit (822 aa).

The region spanning 44–162 (LSKNTNLVVG…DQIALGSNAL (119 aa)) is the tRNA-binding domain. The segment at 201 to 224 (QSSNNNQETKSTNYKTKNSEDQTN) is disordered. The B5 domain occupies 430-513 (RTNPTISLNL…RLYGCHKLPP (84 aa)). Mg(2+) is bound by residues aspartate 491, aspartate 497, and aspartate 501. One can recognise an FDX-ACB domain in the interval 730 to 822 (PKFPTVIRDL…LIKHFHIEIR (93 aa)).

It belongs to the phenylalanyl-tRNA synthetase beta subunit family. Type 1 subfamily. In terms of assembly, tetramer of two alpha and two beta subunits. Mg(2+) is required as a cofactor.

The protein resides in the cytoplasm. It catalyses the reaction tRNA(Phe) + L-phenylalanine + ATP = L-phenylalanyl-tRNA(Phe) + AMP + diphosphate + H(+). This Onion yellows phytoplasma (strain OY-M) protein is Phenylalanine--tRNA ligase beta subunit.